Reading from the N-terminus, the 294-residue chain is Bifunctional protein FolD (294 aa).

Residues 175 to 177 (GAS) and I241 each bind NADP(+).

The protein belongs to the tetrahydrofolate dehydrogenase/cyclohydrolase family. Homodimer.

It catalyses the reaction (6R)-5,10-methylene-5,6,7,8-tetrahydrofolate + NADP(+) = (6R)-5,10-methenyltetrahydrofolate + NADPH. The catalysed reaction is (6R)-5,10-methenyltetrahydrofolate + H2O = (6R)-10-formyltetrahydrofolate + H(+). The protein operates within one-carbon metabolism; tetrahydrofolate interconversion. In terms of biological role, catalyzes the oxidation of 5,10-methylenetetrahydrofolate to 5,10-methenyltetrahydrofolate and then the hydrolysis of 5,10-methenyltetrahydrofolate to 10-formyltetrahydrofolate. The sequence is that of Bifunctional protein FolD from Hahella chejuensis (strain KCTC 2396).